The chain runs to 240 residues: Transcription factor bHLH47 (240 aa).

Residues 1–13 (MVSKTPSTSSDEA) show a composition bias toward polar residues. Positions 1-26 (MVSKTPSTSSDEANATADERCRKGKV) are disordered. The 51-residue stretch at 27–77 (PKRINKAVRERLKREHLNELFIELADTLELNQQNSGKASILCEATRFLKDV) folds into the bHLH domain. Residues 98-131 (VTTEKNELKEETSVLETEISKLQNEIEARANQSK) adopt a coiled-coil conformation. The segment covering 128 to 138 (NQSKPDLNTSP) has biased composition (polar residues). The segment at 128–153 (NQSKPDLNTSPAPEYHHHHYQQQHPE) is disordered.

As to quaternary structure, homodimer. Forms heterodimer with PYEL proteins bHLH115, bHLH104 and ILR3. Expressed constitutively in roots, leaves, stems, and flowers.

The protein localises to the nucleus. The polypeptide is Transcription factor bHLH47 (BHLH47) (Arabidopsis thaliana (Mouse-ear cress)).